The sequence spans 487 residues: Diacylglycerol kinase 4 (487 aa).

The 157-residue stretch at 86–242 (TPEVPLMVFV…LDSWNILITM (157 aa)) folds into the DAGKc domain.

It belongs to the eukaryotic diacylglycerol kinase family. Monomer. As to expression, highly expressed in pollen grains. Expressed in roots, hypocotyls, leaf vasculature, developing anthers and stigmas, and receptacles of siliques.

The protein localises to the endoplasmic reticulum. Its subcellular location is the cytoplasm. The protein resides in the cytosol. It catalyses the reaction a 1,2-diacyl-sn-glycerol + ATP = a 1,2-diacyl-sn-glycero-3-phosphate + ADP + H(+). Its function is as follows. Phosphorylates the second messenger diacylglycerol (DAG) to generate phosphatidic acid (PA), another important signaling molecule. PA is required for plant development and responses to abiotic stress and pathogen attack. May be involved in the accumulation of PA during cold stress. Involved in the regulation of PA and phosphatidylcholine biosynthesis in growing pollen tubes. Required for nitric oxide-dependent pollen tube growth and re-orientation responses. Functions together with DGK2 in male gametophyte development and biosynthesis of phosphatidylglycerol and phosphatidylinositol in the endoplasmic reticulum (ER). Involved in PA production for pollen grain growth, as well as leaf and root growth. Possesses guanylyl cyclase activity in vitro. This Arabidopsis thaliana (Mouse-ear cress) protein is Diacylglycerol kinase 4.